Reading from the N-terminus, the 476-residue chain is RuvB-like helicase 2 (476 aa).

72 to 80 (VGPPSTGKT) is a binding site for ATP.

This sequence belongs to the RuvB family. In terms of assembly, may form heterododecamers with RVB1. Component of the SWR1 chromatin remodeling complex, the INO80 chromatin remodeling complex, and of the R2TP complex.

The protein localises to the nucleus. It carries out the reaction ATP + H2O = ADP + phosphate + H(+). Its function is as follows. DNA helicase which participates in several chromatin remodeling complexes, including the SWR1 and the INO80 complexes. The SWR1 complex mediates the ATP-dependent exchange of histone H2A for the H2A variant HZT1 leading to transcriptional regulation of selected genes by chromatin remodeling. The INO80 complex remodels chromatin by shifting nucleosomes and is involved in DNA repair. Also involved in pre-rRNA processing. This chain is RuvB-like helicase 2 (RVB2), found in Mycosarcoma maydis (Corn smut fungus).